The sequence spans 491 residues: Anthranilate synthase component 1 (491 aa).

Residues S49 and 271–273 (PYL) each bind L-tryptophan. 306–307 (GT) is a chorismate binding site. E333 is a binding site for Mg(2+). Chorismate is bound by residues Y421, R441, 455-457 (GAG), and G457. A Mg(2+)-binding site is contributed by E470.

This sequence belongs to the anthranilate synthase component I family. As to quaternary structure, heterotetramer consisting of two non-identical subunits: a beta subunit (TrpG) and a large alpha subunit (TrpE). Requires Mg(2+) as cofactor.

It carries out the reaction chorismate + L-glutamine = anthranilate + pyruvate + L-glutamate + H(+). It participates in amino-acid biosynthesis; L-tryptophan biosynthesis; L-tryptophan from chorismate: step 1/5. Its activity is regulated as follows. Feedback inhibited by tryptophan. Part of a heterotetrameric complex that catalyzes the two-step biosynthesis of anthranilate, an intermediate in the biosynthesis of L-tryptophan. In the first step, the glutamine-binding beta subunit (TrpG) of anthranilate synthase (AS) provides the glutamine amidotransferase activity which generates ammonia as a substrate that, along with chorismate, is used in the second step, catalyzed by the large alpha subunit of AS (TrpE) to produce anthranilate. In the absence of TrpG, TrpE can synthesize anthranilate directly from chorismate and high concentrations of ammonia. The chain is Anthranilate synthase component 1 (trpE) from Neisseria meningitidis serogroup C / serotype 2a (strain ATCC 700532 / DSM 15464 / FAM18).